A 103-amino-acid polypeptide reads, in one-letter code: Secreted Ly-6/uPAR-related protein 1 (103 aa).

A signal peptide spans 1–22 (MASRWAVQLLLVAAWSMGCGEA). In terms of domain architecture, UPAR/Ly6 spans 24–73 (KCYTCKEPMTSASCRTITRCKPEDTACMTTLVTVEAEYPFNQSPVVTRSC). Disulfide bonds link cysteine 25/cysteine 50, cysteine 28/cysteine 37, cysteine 43/cysteine 73, cysteine 77/cysteine 93, and cysteine 94/cysteine 99.

In terms of assembly, homodimer. Interacts with PLAU. Interacts with CHRNA7. Granulocytes. Expressed in skin. Predominantly expressed in the granular layer of skin, notably the acrosyringium. Identified in several biological fluids such as sweat, saliva, tears, plasma and urine.

It is found in the secreted. Functionally, has an antitumor activity. Was found to be a marker of late differentiation of the skin. Implicated in maintaining the physiological and structural integrity of the keratinocyte layers of the skin. In vitro down-regulates keratinocyte proliferation; the function may involve the proposed role as modulator of nicotinic acetylcholine receptors (nAChRs) activity. In vitro inhibits alpha-7-dependent nAChR currents in an allosteric manner. In T cells may be involved in regulation of intracellular Ca(2+) signaling. Seems to have an immunomodulatory function in the cornea. The function may implicate a possible role as a scavenger receptor for PLAU thereby blocking PLAU-dependent functions of PLAUR such as in cell migration and proliferation. This chain is Secreted Ly-6/uPAR-related protein 1 (SLURP1), found in Homo sapiens (Human).